A 1574-amino-acid chain; its full sequence is Synaptojanin-1 (1574 aa).

Residues 119-442 form the SAC domain; that stretch reads VRKVLNSGNF…GDSISKIYAG (324 aa). 2 positions are modified to phosphoserine: Ser820 and Ser830. Residues 894 to 971 enclose the RRM domain; that stretch reads GTVLVSIKSS…RTITITLKSP (78 aa). Over residues 1029 to 1054 the composition is skewed to low complexity; sequence HLQPSSSSGLGTSPSSSPRTSPCQSP. Residues 1029-1327 are disordered; the sequence is HLQPSSSSGL…GVKQEPTLKS (299 aa). Ser1053 carries the phosphoserine modification. The span at 1080-1100 shows a compositional bias: polar residues; that stretch reads SSQGSPVDTQPAAQKDSSQTL. Residues 1105–1127 show a composition bias toward pro residues; sequence PPPPRPVAPPARPAPPQRPPPPS. Ser1147 and Ser1175 each carry phosphoserine. Arg1198 carries the omega-N-methylarginine modification. The residue at position 1217 (Thr1217) is a Phosphothreonine. Residues 1268 to 1287 are compositionally biased toward pro residues; that stretch reads TMPPSGPQPNLETPPQPPPR. Low complexity predominate over residues 1288–1307; it reads SRSSQSLPSDSSPQLQQEQP. A phosphoserine mark is found at Ser1290 and Ser1350. The residue at position 1354 (Thr1354) is a Phosphothreonine. Disordered regions lie at residues 1363 to 1507 and 1532 to 1574; these read LPSA…SVCP and LPAR…FTER. Composition is skewed to polar residues over residues 1364-1379, 1393-1402, 1424-1436, and 1472-1484; these read PSAS…SVSC, QESMGSSANP, RVQS…TSWL, and DLQS…TSNP. Positions 1403-1425 are 3 X 3 AA repeats of N-P-F; that stretch reads FPSLPCRNPFTDRTAAPGNPFRV. Residues 1535 to 1548 show a composition bias toward pro residues; it reads RRPPPPPPPVPLLP. Low complexity predominate over residues 1549-1563; that stretch reads PGTTSSAGPSTTLPS. Residues 1565–1574 are compositionally biased toward polar residues; the sequence is APSTLDFTER.

Belongs to the synaptojanin family. This sequence in the central section; belongs to the inositol 1,4,5-trisphosphate 5-phosphatase family. As to quaternary structure, interacts with ASH/GRB2. Interacts with PACSIN1, PACSIN2 and PACSIN3. Interacts with AMPH, SH3GL1, SH3GL2 and SH3GL3. Interacts with MYO1E (via SH3 domain). Interacts with BIN1 and DNM1. Interacts with EPS15.

The protein localises to the cytoplasm. The protein resides in the perinuclear region. It carries out the reaction a 1,2-diacyl-sn-glycero-3-phospho-(1D-myo-inositol-4,5-bisphosphate) + H2O = a 1,2-diacyl-sn-glycero-3-phospho-(1D-myo-inositol 4-phosphate) + phosphate. Its function is as follows. Phosphatase that acts on various phosphoinositides, including phosphatidylinositol 4-phosphate, phosphatidylinositol (4,5)-bisphosphate and phosphatidylinositol (3,4,5)-trisphosphate. Has a role in clathrin-mediated endocytosis. Hydrolyzes PIP2 bound to actin regulatory proteins resulting in the rearrangement of actin filaments downstream of tyrosine kinase and ASH/GRB2. This Mus musculus (Mouse) protein is Synaptojanin-1 (Synj1).